The sequence spans 244 residues: UDP-2,3-diacylglucosamine hydrolase (244 aa).

5 residues coordinate Mn(2+): D8, H10, D41, N79, and H114. Residue 79–80 (NR) coordinates substrate. 5 residues coordinate substrate: D122, S160, N164, K167, and H195. The Mn(2+) site is built by H195 and H197.

Belongs to the LpxH family. It depends on Mn(2+) as a cofactor.

The protein resides in the cell inner membrane. The enzyme catalyses UDP-2-N,3-O-bis[(3R)-3-hydroxytetradecanoyl]-alpha-D-glucosamine + H2O = 2-N,3-O-bis[(3R)-3-hydroxytetradecanoyl]-alpha-D-glucosaminyl 1-phosphate + UMP + 2 H(+). The protein operates within glycolipid biosynthesis; lipid IV(A) biosynthesis; lipid IV(A) from (3R)-3-hydroxytetradecanoyl-[acyl-carrier-protein] and UDP-N-acetyl-alpha-D-glucosamine: step 4/6. In terms of biological role, hydrolyzes the pyrophosphate bond of UDP-2,3-diacylglucosamine to yield 2,3-diacylglucosamine 1-phosphate (lipid X) and UMP by catalyzing the attack of water at the alpha-P atom. Involved in the biosynthesis of lipid A, a phosphorylated glycolipid that anchors the lipopolysaccharide to the outer membrane of the cell. This chain is UDP-2,3-diacylglucosamine hydrolase, found in Hahella chejuensis (strain KCTC 2396).